A 646-amino-acid polypeptide reads, in one-letter code: Phosphomethylpyrimidine synthase (646 aa).

Over residues Met-1 to Ala-13 the composition is skewed to polar residues. Residues Met-1–Ser-21 form a disordered region. Substrate-binding positions include Asn-221, Met-250, Tyr-279, His-315, Ser-335 to Gly-337, Asp-376 to Arg-379, and Glu-415. Residue His-419 participates in Zn(2+) binding. Tyr-442 provides a ligand contact to substrate. His-483 serves as a coordination point for Zn(2+). Cys-563, Cys-566, and Cys-571 together coordinate [4Fe-4S] cluster.

It belongs to the ThiC family. Homodimer. The cofactor is [4Fe-4S] cluster.

The enzyme catalyses 5-amino-1-(5-phospho-beta-D-ribosyl)imidazole + S-adenosyl-L-methionine = 4-amino-2-methyl-5-(phosphooxymethyl)pyrimidine + CO + 5'-deoxyadenosine + formate + L-methionine + 3 H(+). Its pathway is cofactor biosynthesis; thiamine diphosphate biosynthesis. Catalyzes the synthesis of the hydroxymethylpyrimidine phosphate (HMP-P) moiety of thiamine from aminoimidazole ribotide (AIR) in a radical S-adenosyl-L-methionine (SAM)-dependent reaction. This chain is Phosphomethylpyrimidine synthase, found in Rhodopseudomonas palustris (strain HaA2).